The chain runs to 321 residues: NADPH-dependent codeinone reductase 1-1 (321 aa).

NADPH is bound by residues Thr-27 and Asp-51. Catalysis depends on proton donor residues Tyr-56 and His-119. His-119 lines the substrate pocket. 5 residues coordinate NADPH: Gln-187, Ser-214, Leu-216, Ser-264, and Arg-269.

The protein belongs to the aldo/keto reductase family. Latex secreting cells (laticifer cells). Expressed constitutively and ubiquitously with highest levels in capsules. Restricted to the parietal region of sieve elements adjacent or proximal to laticifers in roots, stems, leaves and carpels.

The protein resides in the cytoplasm. The protein localises to the cytosol. The catalysed reaction is codeine + NADP(+) = codeinone + NADPH + H(+). It carries out the reaction neopine + NADP(+) = neopinone + NADPH + H(+). The enzyme catalyses morphine + NADP(+) = morphinone + NADPH + H(+). It catalyses the reaction neomorphine + NADP(+) = neomorphinone + NADPH + H(+). Its pathway is alkaloid biosynthesis; morphine biosynthesis. Functionally, NADPH-dependent reductase involved in biosynthesis of morphinan-type benzylisoquinoline and opiate alkaloids natural products. Reduces codeinone to codeine in the penultimate step in morphine biosynthesis. Can use morphinone, hydrocodone and hydromorphone as substrate during reductive reaction with NADPH as cofactor, and morphine and dihydrocodeine as substrate during oxidative reaction with NADP as cofactor. Converts morphinone to morphine, and neomorphinone to neomorphine. Reduces irreversibly neopinone, a spontaneous isomer of codeinone, to neopine; in planta, neopine levels are limited to low levels. This is NADPH-dependent codeinone reductase 1-1 from Papaver somniferum (Opium poppy).